A 183-amino-acid chain; its full sequence is Nucleoside triphosphate pyrophosphatase (183 aa).

Asp-71 acts as the Proton acceptor in catalysis.

This sequence belongs to the Maf family. Requires a divalent metal cation as cofactor.

Its subcellular location is the cytoplasm. The enzyme catalyses a ribonucleoside 5'-triphosphate + H2O = a ribonucleoside 5'-phosphate + diphosphate + H(+). It carries out the reaction a 2'-deoxyribonucleoside 5'-triphosphate + H2O = a 2'-deoxyribonucleoside 5'-phosphate + diphosphate + H(+). Functionally, nucleoside triphosphate pyrophosphatase. May have a dual role in cell division arrest and in preventing the incorporation of modified nucleotides into cellular nucleic acids. The polypeptide is Nucleoside triphosphate pyrophosphatase (Campylobacter jejuni subsp. jejuni serotype O:6 (strain 81116 / NCTC 11828)).